Reading from the N-terminus, the 790-residue chain is N-methylputrescine oxidase 1, peroxisomal (790 aa).

Residues 1-23 are disordered; sequence MATTKQKVTAPSPSPSSSTASCC. A compositionally biased stretch (low complexity) spans 9-23; that stretch reads TAPSPSPSSSTASCC. 423–434 serves as a coordination point for substrate; sequence AFDAGEDGLGKN. Residue Asp425 is the Proton acceptor of the active site. Cysteines 444 and 470 form a disulfide. Residue 506–511 participates in substrate binding; sequence VANYEY. Tyr509 (schiff-base intermediate with substrate; via topaquinone) is an active-site residue. Tyr509 carries the 2',4',5'-topaquinone modification. His559 and His561 together coordinate Cu cation. Asp714 and Ile715 together coordinate Mn(2+). Cu cation is bound at residue His725.

Belongs to the copper/topaquinone oxidase family. Homodimer. The cofactor is Cu cation. Zn(2+) is required as a cofactor. L-topaquinone serves as cofactor. In terms of processing, topaquinone (TPQ) is generated by copper-dependent autoxidation of a specific tyrosyl residue. In terms of tissue distribution, mainly expressed in roots, and, to a lower extent, in stems.

The protein localises to the peroxisome. It carries out the reaction a primary methyl amine + O2 + H2O = an aldehyde + H2O2 + NH4(+). The catalysed reaction is N-methylputrescine + O2 + H2O = 4-methylaminobutanal + H2O2 + NH4(+). Its pathway is alkaloid biosynthesis; nicotine biosynthesis. Involved in the biosynthesis of pyridine alkaloid natural products, leading mainly to the production of anabasine, anatabine, nicotine and nornicotine, effective deterrents against herbivores with antiparasitic and pesticide properties (neurotoxins); nornicotine serves as the precursor in the synthesis of the carcinogen compound N'-nitrosonornicotine (NNN). Amine oxidase which mediates the deamination of N-methylputrescine to produce 4-methylaminobutanal. Oxidizes preferentially N-methylated amines. The sequence is that of N-methylputrescine oxidase 1, peroxisomal from Nicotiana tabacum (Common tobacco).